Here is a 239-residue protein sequence, read N- to C-terminus: Probable transcriptional regulatory protein Pnuc_0618 (239 aa).

A disordered region spans residues 1–21 (MAGHSKWANIQHRKGRQDEKR).

Belongs to the TACO1 family.

Its subcellular location is the cytoplasm. The sequence is that of Probable transcriptional regulatory protein Pnuc_0618 from Polynucleobacter asymbioticus (strain DSM 18221 / CIP 109841 / QLW-P1DMWA-1) (Polynucleobacter necessarius subsp. asymbioticus).